The primary structure comprises 558 residues: Polypeptide N-acetylgalactosaminyltransferase 16 (558 aa).

The Cytoplasmic segment spans residues 1–6 (MRKIRA). The chain crosses the membrane as a helical; Signal-anchor for type II membrane protein span at residues 7–26 (NAIAILTVAWILGTFYYLWQ). At 27–558 (DNRAHAASSG…AQQWQLLPHT (532 aa)) the chain is on the lumenal side. The disordered stretch occupies residues 33–54 (ASSGGRGAQRAGRRSEQLREDR). The segment covering 45 to 54 (RRSEQLREDR) has biased composition (basic and acidic residues). Intrachain disulfides connect Cys113–Cys340, Cys331–Cys409, Cys441–Cys460, Cys486–Cys506, and Cys530–Cys543. The segment at 122 to 227 (LPATSVIITF…TEWLPPMLQR (106 aa)) is catalytic subdomain A. The substrate site is built by Asp163 and Arg188. Residue Asp211 participates in Mn(2+) binding. Substrate is bound at residue Ser212. His213 is a Mn(2+) binding site. Positions 286-348 (PIRTPVIAGG…PCSRVGHVFR (63 aa)) are catalytic subdomain B. Trp317 serves as a coordination point for substrate. His345 lines the Mn(2+) pocket. Substrate contacts are provided by Arg348, His351, and Tyr353. The Ricin B-type lectin domain occupies 428 to 555 (KEALPGIIKQ…DAQAQQWQLL (128 aa)).

Belongs to the glycosyltransferase 2 family. GalNAc-T subfamily. Requires Mn(2+) as cofactor.

The protein localises to the golgi apparatus membrane. The enzyme catalyses L-seryl-[protein] + UDP-N-acetyl-alpha-D-galactosamine = a 3-O-[N-acetyl-alpha-D-galactosaminyl]-L-seryl-[protein] + UDP + H(+). It carries out the reaction L-threonyl-[protein] + UDP-N-acetyl-alpha-D-galactosamine = a 3-O-[N-acetyl-alpha-D-galactosaminyl]-L-threonyl-[protein] + UDP + H(+). It functions in the pathway protein modification; protein glycosylation. Catalyzes the initial reaction in O-linked oligosaccharide biosynthesis, the transfer of an N-acetyl-D-galactosamine residue to a serine or threonine residue on the protein receptor. The chain is Polypeptide N-acetylgalactosaminyltransferase 16 (GALNT16) from Homo sapiens (Human).